Consider the following 338-residue polypeptide: MNLSKFKRYPLTFGPSPITPLKRLSEHLGGKVELYAKREDCNSGLAFGGNKTRKLEYLVPEAIDGGYDTLVSIGGIQSNQTRQVAAVAAHLGMKCVLVQENWVNYSDALYDRVGNIEMSRIMGADVRLDSAGFDIGIRPSWEKAMADVEESGGKPFPIPAGCSEHPYGGLGFVRFADEVRQQEEELGFKFDYIVVCSVTGSTHAGMLVGFAADGRAQRVIGIDASAKPEKTRAQVLRIAQNTAKLVELGREITAEDVVLDTRYAYPEYGLPNDGTLEAIRLCARLEGVLTDPVYEGKSMHGMIDMVRNGEFPEGSKVLYAHLGGVPALNAYSFLFKDG.

Residue K51 is modified to N6-(pyridoxal phosphate)lysine. S78 serves as the catalytic Nucleophile.

It belongs to the ACC deaminase/D-cysteine desulfhydrase family. As to quaternary structure, homotrimer. Requires pyridoxal 5'-phosphate as cofactor.

It catalyses the reaction 1-aminocyclopropane-1-carboxylate + H2O = 2-oxobutanoate + NH4(+). Functionally, catalyzes a cyclopropane ring-opening reaction, the irreversible conversion of 1-aminocyclopropane-1-carboxylate (ACC) to ammonia and alpha-ketobutyrate. Allows growth on ACC as a nitrogen source. In Pseudomonas syringae pv. syringae (strain B728a), this protein is 1-aminocyclopropane-1-carboxylate deaminase.